A 443-amino-acid chain; its full sequence is 26S proteasome regulatory subunit rpn501 (443 aa).

Phosphoserine is present on Ser209. The PCI domain maps to 230 to 402 (DVCKYYRAVY…QVISFKKSQN (173 aa)).

Belongs to the proteasome subunit p55 family.

It is found in the nucleus. In terms of biological role, acts as a regulatory subunit of the 26S proteasome which is involved in the ATP-dependent degradation of ubiquitinated proteins. Required for proper proteasome assembly. The chain is 26S proteasome regulatory subunit rpn501 (rpn501) from Schizosaccharomyces pombe (strain 972 / ATCC 24843) (Fission yeast).